We begin with the raw amino-acid sequence, 190 residues long: Biphenyl-2,3-diol 1,2-dioxygenase 3 (190 aa).

The region spanning 6-125 (RLAHFVLQTN…DGNMVELQID (120 aa)) is the VOC domain. Residues His9, His73, and Glu121 each coordinate Fe cation.

Belongs to the extradiol ring-cleavage dioxygenase family. In terms of assembly, homohexamer. It depends on Fe(2+) as a cofactor.

It carries out the reaction biphenyl-2,3-diol + O2 = 2-hydroxy-6-oxo-6-phenylhexa-2,4-dienoate + H(+). The protein operates within xenobiotic degradation; biphenyl degradation; 2-hydroxy-2,4-pentadienoate and benzoate from biphenyl: step 3/4. This Rhodococcus globerulus protein is Biphenyl-2,3-diol 1,2-dioxygenase 3 (bphC3).